The following is a 157-amino-acid chain: Transcription elongation factor GreA (157 aa).

Residues 12-74 are a coiled coil; it reads LKKLEEELEY…TLEAMLKNAK (63 aa).

This sequence belongs to the GreA/GreB family.

In terms of biological role, necessary for efficient RNA polymerase transcription elongation past template-encoded arresting sites. The arresting sites in DNA have the property of trapping a certain fraction of elongating RNA polymerases that pass through, resulting in locked ternary complexes. Cleavage of the nascent transcript by cleavage factors such as GreA or GreB allows the resumption of elongation from the new 3'terminus. GreA releases sequences of 2 to 3 nucleotides. The protein is Transcription elongation factor GreA of Thermoanaerobacter pseudethanolicus (strain ATCC 33223 / 39E) (Clostridium thermohydrosulfuricum).